We begin with the raw amino-acid sequence, 299 residues long: tRNA dimethylallyltransferase (299 aa).

Gly8–Thr15 contributes to the ATP binding site. Thr10–Thr15 is a binding site for substrate. The interval Asp33–Gln36 is interaction with substrate tRNA.

It belongs to the IPP transferase family. As to quaternary structure, monomer. It depends on Mg(2+) as a cofactor.

The enzyme catalyses adenosine(37) in tRNA + dimethylallyl diphosphate = N(6)-dimethylallyladenosine(37) in tRNA + diphosphate. Its function is as follows. Catalyzes the transfer of a dimethylallyl group onto the adenine at position 37 in tRNAs that read codons beginning with uridine, leading to the formation of N6-(dimethylallyl)adenosine (i(6)A). The polypeptide is tRNA dimethylallyltransferase (Anaeromyxobacter dehalogenans (strain 2CP-C)).